A 379-amino-acid chain; its full sequence is Protein PatA (379 aa).

Residues 181-226 (RREASSQEISSSTEHNQIPVNNRRSTKFTSPPHTQPKPEPRLPQIN) are disordered. The segment covering 186–212 (SQEISSSTEHNQIPVNNRRSTKFTSPP) has biased composition (polar residues). One can recognise a Response regulatory domain in the interval 262-378 (TIFCIDENPI…DLLKVIFKHI (117 aa)). Residue D313 is modified to 4-aspartylphosphate.

The protein resides in the cell septum. In terms of biological role, controls heterocyst pattern formation. Required for the differentiation of intercalary heterocysts but not for terminal heterocysts. This Nostoc sp. (strain PCC 7120 / SAG 25.82 / UTEX 2576) protein is Protein PatA (patA).